We begin with the raw amino-acid sequence, 799 residues long: MRFSPTFFLLSQLRLTRRRAATSSRFYAVSALNNPNNLSDSEQQQVNHLNLSKLTQHGLQRLLNSTRDDPNLALSFLRQLKEHGVSPNVNAYATLVRILTTWGLDIKLDSVLVELIKNEERGFTVMDLIEVIGEQAEEKKRSFVLIRVSGALVKAYVSLGMFDEATDVLFQSKRLDCVVDIKACNFLMNRMTEFGKIGMLMTLFKQLKQLGLCANEYTYAIVVKALCRKGNLEEAAMLLIENESVFGYKTFINGLCVTGETEKAVALILELIDRKYLAGDDLRAVLGMVVRGFCNEMKMKAAESVIIEMEEIGFGLDVYACLAVIDRYCKNMNLPEALGFLDKMLGKGLKVNCVIVSLILQCYCKMDMCLEALEKFKEFRDMNIFLDRVCYNVAFDALSKLGRVEEAFELLQEMKDRGIVPDVINYTTLIDGYCLQGKVVDALDLIDEMIGNGMSPDLITYNVLVSGLARNGHEEEVLEIYERMKAEGPKPNAVTNSVIIEGLCFARKVKEAEDFFSSLEQKCPENKASFVKGYCEAGLSKKAYKAFVRLEYPLRKSVYIKLFFSLCIEGYLEKAHDVLKKMSAYRVEPGRSMCGKMIGAFCKLNNVREAQVLFDTMVERGLIPDLFTYTIMIHTYCRLNELQKAESLFEDMKQRGIKPDVVTYTVLLDRYLKLDPEHHETCSVQGEVGKRKASEVLREFSAAGIGLDVVCYTVLIDRQCKMNNLEQAAELFDRMIDSGLEPDMVAYTTLISSYFRKGYIDMAVTLVTELSKKYNIPSESFEAAVKSAALKAKRFQYGE.

A mitochondrion-targeting transit peptide spans 1-27 (MRFSPTFFLLSQLRLTRRRAATSSRFY). 18 PPR repeats span residues 145–179 (LIRV…DCVV), 180–214 (DIKA…GLCA), 215–250 (NEYT…GYKT), 251–278 (FING…KYLA), 282–316 (LRAV…GFGL), 317–351 (DVYA…GLKV), 352–386 (NCVI…NIFL), 387–421 (DRVC…GIVP), 422–456 (DVIN…GMSP), 457–491 (DLIT…GPKP), 492–522 (NAVT…LEQK), 523–553 (CPEN…LEYP), 555–589 (RKSV…RVEP), 590–624 (GRSM…GLIP), 625–659 (DLFT…GIKP), 660–695 (DVVT…KASE), 708–742 (DVVC…GLEP), and 743–777 (DMVA…YNIP).

Belongs to the PPR family. P subfamily.

It is found in the mitochondrion. The protein is Pentatricopeptide repeat-containing protein At2g26790, mitochondrial of Arabidopsis thaliana (Mouse-ear cress).